Consider the following 475-residue polypeptide: Glutamate--tRNA ligase (475 aa).

The 'HIGH' region signature appears at 8-18; sequence PSPTGTLHIGT. The 'KMSKS' region motif lies at 247–251; the sequence is KLSKR. An ATP-binding site is contributed by K250.

Belongs to the class-I aminoacyl-tRNA synthetase family. Glutamate--tRNA ligase type 1 subfamily. In terms of assembly, monomer.

Its subcellular location is the cytoplasm. The catalysed reaction is tRNA(Glu) + L-glutamate + ATP = L-glutamyl-tRNA(Glu) + AMP + diphosphate. Functionally, catalyzes the attachment of glutamate to tRNA(Glu) in a two-step reaction: glutamate is first activated by ATP to form Glu-AMP and then transferred to the acceptor end of tRNA(Glu). This chain is Glutamate--tRNA ligase, found in Synechococcus sp. (strain RCC307).